Here is a 132-residue protein sequence, read N- to C-terminus: Translation initiation factor 5A (132 aa).

A Hypusine modification is found at Lys36.

It belongs to the eIF-5A family.

It localises to the cytoplasm. Its function is as follows. Functions by promoting the formation of the first peptide bond. The protein is Translation initiation factor 5A (eIF5A) of Desulfurococcus amylolyticus (strain DSM 18924 / JCM 16383 / VKM B-2413 / 1221n) (Desulfurococcus kamchatkensis).